The sequence spans 375 residues: Succinyl-diaminopimelate desuccinylase (375 aa).

Zn(2+) is bound at residue His-66. Asp-68 is a catalytic residue. Asp-99 is a binding site for Zn(2+). Glu-133 functions as the Proton acceptor in the catalytic mechanism. Residues Glu-134, Glu-162, and His-348 each contribute to the Zn(2+) site.

The protein belongs to the peptidase M20A family. DapE subfamily. In terms of assembly, homodimer. The cofactor is Zn(2+). It depends on Co(2+) as a cofactor.

The enzyme catalyses N-succinyl-(2S,6S)-2,6-diaminopimelate + H2O = (2S,6S)-2,6-diaminopimelate + succinate. It functions in the pathway amino-acid biosynthesis; L-lysine biosynthesis via DAP pathway; LL-2,6-diaminopimelate from (S)-tetrahydrodipicolinate (succinylase route): step 3/3. Functionally, catalyzes the hydrolysis of N-succinyl-L,L-diaminopimelic acid (SDAP), forming succinate and LL-2,6-diaminopimelate (DAP), an intermediate involved in the bacterial biosynthesis of lysine and meso-diaminopimelic acid, an essential component of bacterial cell walls. The protein is Succinyl-diaminopimelate desuccinylase of Herminiimonas arsenicoxydans.